The primary structure comprises 139 residues: Diacylglycerol acyltransferase/mycolyltransferase Ag85A (139 aa).

S10 acts as the Nucleophile in catalysis. Substrate is bound by residues S10 and D38. E114 is an active-site residue. Residues 116-119 (FVRT) and K123 contribute to the substrate site.

This sequence belongs to the mycobacterial A85 antigen family. Homodimer.

The protein localises to the secreted. It localises to the cell wall. The protein resides in the cytoplasm. The catalysed reaction is an acyl-CoA + a 1,2-diacyl-sn-glycerol = a triacyl-sn-glycerol + CoA. It carries out the reaction 2 alpha,alpha'-trehalose 6-mycolate = alpha,alpha'-trehalose 6,6'-bismycolate + alpha,alpha-trehalose. In terms of biological role, the antigen 85 proteins (FbpA, FbpB, FbpC) are responsible for the high affinity of mycobacteria for fibronectin, a large adhesive glycoprotein, which facilitates the attachment of M.tuberculosis to murine alveolar macrophages (AMs). They also help to maintain the integrity of the cell wall by catalyzing the transfer of mycolic acids to cell wall arabinogalactan, and through the synthesis of alpha,alpha-trehalose dimycolate (TDM, cord factor). They catalyze the transfer of a mycoloyl residue from one molecule of alpha,alpha-trehalose monomycolate (TMM) to another TMM, leading to the formation of TDM. FbpA mediates triacylglycerol (TAG) formation with long-chain acyl-CoA as the acyl donor and 1,2-dipalmitoyl-sn-glycerol (1,2-dipalmitin) as the acyl acceptor. It has a preference for C26:0-CoA over C18:1-CoA. In Mycobacterium marinum, this protein is Diacylglycerol acyltransferase/mycolyltransferase Ag85A (fbpA).